Reading from the N-terminus, the 193-residue chain is dTTP/UTP pyrophosphatase (193 aa).

Aspartate 68 serves as the catalytic Proton acceptor.

Belongs to the Maf family. YhdE subfamily. Requires a divalent metal cation as cofactor.

The protein localises to the cytoplasm. It catalyses the reaction dTTP + H2O = dTMP + diphosphate + H(+). The catalysed reaction is UTP + H2O = UMP + diphosphate + H(+). In terms of biological role, nucleoside triphosphate pyrophosphatase that hydrolyzes dTTP and UTP. May have a dual role in cell division arrest and in preventing the incorporation of modified nucleotides into cellular nucleic acids. The sequence is that of dTTP/UTP pyrophosphatase from Ruegeria sp. (strain TM1040) (Silicibacter sp.).